The following is a 561-amino-acid chain: Transcription factor Clamp (561 aa).

The segment at 127–149 adopts a C2H2-type 1 zinc-finger fold; sequence FKCDVCSDMFPHLALLNAHKRMH. Residues Cys-129, Cys-132, His-145, and His-149 each contribute to the Zn(2+) site. Residues 290–315 form a disordered region; the sequence is TGGTTPKREASSGSGHHPVKKRNSQQ. 6 consecutive C2H2-type zinc fingers follow at residues 360–382, 388–410, 416–438, 444–466, 472–494, and 500–522; these read FSCN…KKLH, YKCS…ARIH, YKCQ…ERTH, YVCG…RRIH, YKCE…AKVH, and YKCE…RGIH.

Homodimer. Interacts with msl-2; promoting recruitment of the male-specific lethal (MSL) histone acetyltransferase complex to chromatin. Interacts with Nelf-A. Interacts with NELF-B.

It is found in the nucleus. The protein localises to the chromosome. Transcription factor involved in X-chromosome dosage compensation in males, the process by which transcription of the single X chromosome in the male is elevated. Binds to the DNA sequence (GA)n. Clamp-binding promotes nucleosome depletion and chromatin accessibility, thereby allowing access to other transcription factors. Specifically binds to cis-acting elements on the X-chromosome named chromatin entry sites and promotes recruitment of the male-specific lethal (MSL) histone acetyltransferase complex, which associates with actively transcribed genes on the male X-chromosome to upregulate their expression. Mechanistically, acts by promoting chromatin accessibility at chromatin entry sites, facilitating DNA-binding of msl-2, followed by MSL complex recruitment. In addition to dosage compensation, also involved in zygotic genome activation (ZGA), a critical event in early embryonic development during which the developmental control passes from maternally provided mRNAs to the expression of the zygotic genome after fertilization. Maternally-provided protein cooperates with Zelda (zld) to activate zygotic transcription by increasing chromatin accessibility at promoters of specific genes and facilitate zld occupancy at a subset of key embryonic promoters. Also acts as an activator of gypsy chromatin insulator function by promoting binding of Cp190 to chromatin. This is Transcription factor Clamp from Drosophila melanogaster (Fruit fly).